We begin with the raw amino-acid sequence, 282 residues long: Pantothenate synthetase (282 aa).

ATP is bound at residue 30-37; that stretch reads MGYLHEGH. Residue His37 is the Proton donor of the active site. Residue Gln61 coordinates (R)-pantoate. Residue Gln61 coordinates beta-alanine. 147–150 contacts ATP; that stretch reads GMKD. Gln153 contacts (R)-pantoate. ATP is bound by residues Val176 and 184–187; that span reads KSSR.

The protein belongs to the pantothenate synthetase family. As to quaternary structure, homodimer.

The protein resides in the cytoplasm. The enzyme catalyses (R)-pantoate + beta-alanine + ATP = (R)-pantothenate + AMP + diphosphate + H(+). It functions in the pathway cofactor biosynthesis; (R)-pantothenate biosynthesis; (R)-pantothenate from (R)-pantoate and beta-alanine: step 1/1. Catalyzes the condensation of pantoate with beta-alanine in an ATP-dependent reaction via a pantoyl-adenylate intermediate. This is Pantothenate synthetase from Bacillus cereus (strain B4264).